The sequence spans 341 residues: Glyceraldehyde-3-phosphate dehydrogenase 1 (341 aa).

Residues 13 to 14, aspartate 35, and lysine 85 each bind NAD(+); that span reads RI. Residues 157–159, threonine 188, 217–218, and arginine 240 each bind D-glyceraldehyde 3-phosphate; these read SCT and TG. Cysteine 158 (nucleophile) is an active-site residue. Asparagine 322 lines the NAD(+) pocket.

Belongs to the glyceraldehyde-3-phosphate dehydrogenase family. In terms of assembly, homotetramer.

It localises to the cytoplasm. It carries out the reaction D-glyceraldehyde 3-phosphate + phosphate + NAD(+) = (2R)-3-phospho-glyceroyl phosphate + NADH + H(+). The protein operates within carbohydrate degradation; glycolysis; pyruvate from D-glyceraldehyde 3-phosphate: step 1/5. This chain is Glyceraldehyde-3-phosphate dehydrogenase 1 (gpd-1), found in Caenorhabditis elegans.